Consider the following 404-residue polypeptide: Demethylphylloquinone reductase NdbB (404 aa).

7–43 (RICILGGGFGGLYTALRLGQLSWEGHTPPEIVLVDQR) is an FAD binding site. An NADP(+)-binding site is contributed by 159–195 (IRIAIVGGGYSGVELAAKLGDRLGERGRIRIIERGKE).

It belongs to the NADH dehydrogenase family. FAD serves as cofactor.

The enzyme catalyses demethylphylloquinone + NADPH + H(+) = demethylphylloquinol + NADP(+). The protein operates within cofactor biosynthesis; phylloquinone biosynthesis. Inhibited by dicumarol. Bifunctional oxidoreductase probably ables to act both on prenyl naphthoquinones and on prenyl benzoquinones. Catalyzes the penultimate step in the biosynthesis of vitamin K1. In Synechocystis sp. (strain ATCC 27184 / PCC 6803 / Kazusa), this protein is Demethylphylloquinone reductase NdbB.